The following is a 328-amino-acid chain: Probable cell division protein WhiA (328 aa).

A DNA-binding region (H-T-H motif) is located at residues 275-308 (SLEELGRLAEPPMTKDAVAGRIRRLLSMADKRAE).

Belongs to the WhiA family.

Its function is as follows. Involved in cell division and chromosome segregation. This is Probable cell division protein WhiA from Corynebacterium jeikeium (strain K411).